The sequence spans 454 residues: Cerebellar degeneration-related protein 2 (454 aa).

Coiled coils occupy residues 44-142 and 192-265; these read ELED…SGQG and EEEN…QSEH. Positions 134–153 are disordered; sequence EELKSSGQGRRSPGKCDQEK. Position 311 is a phosphoserine (serine 311). A coiled-coil region spans residues 346–380; the sequence is LHEVDTQYSALKVKYEELLKKCQEEQDSLSHKAVQ.

The protein belongs to the CDR2 family.

The chain is Cerebellar degeneration-related protein 2 (CDR2) from Homo sapiens (Human).